Consider the following 141-residue polypeptide: Ribonuclease P protein component (141 aa).

A compositionally biased stretch (basic and acidic residues) spans 114 to 134; it reads RRIKAKGERRGDGKRRTERPE. The interval 114–141 is disordered; sequence RRIKAKGERRGDGKRRTERPESGPVNGK.

It belongs to the RnpA family. In terms of assembly, consists of a catalytic RNA component (M1 or rnpB) and a protein subunit.

The catalysed reaction is Endonucleolytic cleavage of RNA, removing 5'-extranucleotides from tRNA precursor.. RNaseP catalyzes the removal of the 5'-leader sequence from pre-tRNA to produce the mature 5'-terminus. It can also cleave other RNA substrates such as 4.5S RNA. The protein component plays an auxiliary but essential role in vivo by binding to the 5'-leader sequence and broadening the substrate specificity of the ribozyme. In Brucella anthropi (strain ATCC 49188 / DSM 6882 / CCUG 24695 / JCM 21032 / LMG 3331 / NBRC 15819 / NCTC 12168 / Alc 37) (Ochrobactrum anthropi), this protein is Ribonuclease P protein component.